A 402-amino-acid polypeptide reads, in one-letter code: Putative neuropeptide Y receptor 11 (402 aa).

At 1–45 (MGSVNESCDNYVEIFNKINYFFRDDQVINGTEYSPKEFGYFITFA) the chain is on the extracellular side. 2 N-linked (GlcNAc...) asparagine glycosylation sites follow: N5 and N29. Residues 46-66 (YMLIILFGAIGNFLTIIVVIL) traverse the membrane as a helical segment. At 67–85 (NPAMRTTRNFFILNLALSD) the chain is on the cytoplasmic side. The chain crosses the membrane as a helical span at residues 86-106 (FFVCIVTAPTTLYTVLYMFWP). At 107–122 (FSRTLCKIAGSLQGFN) the chain is on the extracellular side. Cysteines 112 and 194 form a disulfide. The chain crosses the membrane as a helical span at residues 123–143 (IFLSTFSIASIAVDRYVLIIF). Residues 144–152 (PTKRERQQN) are Cytoplasmic-facing. A helical membrane pass occupies residues 153–173 (LSFCFFIMIWVISLILAVPLL). The Extracellular portion of the chain corresponds to 174 to 210 (QASDLTPVFVEPSCDLALYICHEQNEIWEKMIISKGT). Residues 211 to 231 (YTLAVLITQYAFPLFSLVFAY) traverse the membrane as a helical segment. Residues 232 to 272 (SRIAHRMKLRFANRNQNVTTNTNTSQRRRSVVERQRRTHLL) lie on the Cytoplasmic side of the membrane. The helical transmembrane segment at 273–293 (LVCVVAVFAVAWLPLNVFHIF) threads the bilayer. Residues 294–306 (NTFELVNSFSVTT) are Extracellular-facing. A helical transmembrane segment spans residues 307-328 (FSICHCLAMCSACLNPLIYAFF). At 329 to 402 (NHNFRIEFMH…LSAMEQDEQL (74 aa)) the chain is on the cytoplasmic side.

The protein belongs to the G-protein coupled receptor 1 family.

The protein resides in the cell membrane. Functionally, could be a receptor for neuropeptide Y and peptide YY. This Caenorhabditis elegans protein is Putative neuropeptide Y receptor 11 (npr-11).